Here is a 386-residue protein sequence, read N- to C-terminus: bHLH transcription factor RHL1 (386 aa).

A disordered region spans residues 119-186 (FTGSLNGTQP…RRGQATDPHS (68 aa)). Positions 127–137 (QPQQHFQHPPQ) are enriched in low complexity. Residues 138–151 (GNSNQIQGQNFGAT) show a composition bias toward polar residues. The segment at 180-193 (QATDPHSIAERLRR) is basic motif; degenerate. One can recognise a bHLH domain in the interval 180–229 (QATDPHSIAERLRRERIAERMKALQELVPNANKTDKASMLDEIIDYVKFL). The segment at 194-229 (ERIAERMKALQELVPNANKTDKASMLDEIIDYVKFL) is helix-loop-helix motif.

Expressed in root epidermal cells.

The protein resides in the nucleus. Its function is as follows. Transcription factor that regulates the development of root hairs. In Lotus japonicus (Lotus corniculatus var. japonicus), this protein is bHLH transcription factor RHL1.